The following is a 95-amino-acid chain: Large ribosomal subunit protein uL23 (95 aa).

This sequence belongs to the universal ribosomal protein uL23 family. Part of the 50S ribosomal subunit. Contacts protein L29, and trigger factor when it is bound to the ribosome.

Functionally, one of the early assembly proteins it binds 23S rRNA. One of the proteins that surrounds the polypeptide exit tunnel on the outside of the ribosome. Forms the main docking site for trigger factor binding to the ribosome. In Fusobacterium nucleatum subsp. nucleatum (strain ATCC 25586 / DSM 15643 / BCRC 10681 / CIP 101130 / JCM 8532 / KCTC 2640 / LMG 13131 / VPI 4355), this protein is Large ribosomal subunit protein uL23.